The chain runs to 179 residues: ATP synthase subunit delta (179 aa).

This sequence belongs to the ATPase delta chain family. As to quaternary structure, F-type ATPases have 2 components, F(1) - the catalytic core - and F(0) - the membrane proton channel. F(1) has five subunits: alpha(3), beta(3), gamma(1), delta(1), epsilon(1). F(0) has three main subunits: a(1), b(2) and c(10-14). The alpha and beta chains form an alternating ring which encloses part of the gamma chain. F(1) is attached to F(0) by a central stalk formed by the gamma and epsilon chains, while a peripheral stalk is formed by the delta and b chains.

The protein localises to the cell membrane. Functionally, f(1)F(0) ATP synthase produces ATP from ADP in the presence of a proton or sodium gradient. F-type ATPases consist of two structural domains, F(1) containing the extramembraneous catalytic core and F(0) containing the membrane proton channel, linked together by a central stalk and a peripheral stalk. During catalysis, ATP synthesis in the catalytic domain of F(1) is coupled via a rotary mechanism of the central stalk subunits to proton translocation. Its function is as follows. This protein is part of the stalk that links CF(0) to CF(1). It either transmits conformational changes from CF(0) to CF(1) or is implicated in proton conduction. This is ATP synthase subunit delta from Natranaerobius thermophilus (strain ATCC BAA-1301 / DSM 18059 / JW/NM-WN-LF).